Consider the following 283-residue polypeptide: Lactoylglutathione lyase GLX1 (283 aa).

Ala-2 bears the N-acetylalanine mark. VOC domains lie at 17 to 141 (RFLH…LIQR) and 147 to 275 (PFCQ…LVDN). His-20 contributes to the Zn(2+) binding site. Residue Arg-24 coordinates substrate. Glu-71 is a binding site for Zn(2+). 2 residues coordinate substrate: Asn-75 and His-89. The Zn(2+) site is built by His-89, Glu-137, and Gln-150. Glu-137 functions as the Proton donor/acceptor in the catalytic mechanism. The substrate site is built by Gln-150 and Arg-154. Gln-150 serves as a coordination point for a divalent metal cation. Glu-201 lines the Zn(2+) pocket. Residue Glu-201 participates in a divalent metal cation binding. Position 205 (Asn-205) interacts with substrate. Gln-219 is a binding site for a divalent metal cation. Residue 251 to 252 (PL) participates in substrate binding. Val-271 serves as a coordination point for a divalent metal cation.

Belongs to the glyoxalase I family. In terms of assembly, homodimer. It depends on Zn(2+) as a cofactor. In terms of processing, phosphorylated by SnRK2.8.

It carries out the reaction (R)-S-lactoylglutathione = methylglyoxal + glutathione. It functions in the pathway secondary metabolite metabolism; methylglyoxal degradation; (R)-lactate from methylglyoxal: step 1/2. In terms of biological role, catalyzes the conversion of hemimercaptal, formed from methylglyoxal and glutathione, to S-lactoylglutathione. In Arabidopsis thaliana (Mouse-ear cress), this protein is Lactoylglutathione lyase GLX1.